We begin with the raw amino-acid sequence, 454 residues long: UPF0210 protein Memar_2269 (454 aa).

Belongs to the UPF0210 family.

This is UPF0210 protein Memar_2269 from Methanoculleus marisnigri (strain ATCC 35101 / DSM 1498 / JR1).